A 347-amino-acid polypeptide reads, in one-letter code: NADH-ubiquinone oxidoreductase chain 2 (347 aa).

11 helical membrane-spanning segments follow: residues Pro3–Ser23, His25–Met45, Tyr59–Leu79, Ala96–Pro116, Ile122–Leu142, Ile149–Gly169, Ile178–Pro198, Met200–Met220, Ala237–Leu257, Glu274–Met294, and Leu325–Ile345.

This sequence belongs to the complex I subunit 2 family. In terms of assembly, core subunit of respiratory chain NADH dehydrogenase (Complex I) which is composed of 45 different subunits. Interacts with TMEM242.

The protein localises to the mitochondrion inner membrane. It carries out the reaction a ubiquinone + NADH + 5 H(+)(in) = a ubiquinol + NAD(+) + 4 H(+)(out). Functionally, core subunit of the mitochondrial membrane respiratory chain NADH dehydrogenase (Complex I) which catalyzes electron transfer from NADH through the respiratory chain, using ubiquinone as an electron acceptor. Essential for the catalytic activity and assembly of complex I. This chain is NADH-ubiquinone oxidoreductase chain 2, found in Cynictis penicillata (Yellow mongoose).